The sequence spans 198 residues: MTLESYAGDVHTVPQSENSMEERGGGELFVPPLNFAMVDNGIFRSGFPEPVSFSFLQSLRLKSIIYLCPEAYPEVNREFAKSNGIQVFQFGIERCKEPFVNIPDEVIREALQVLLDTENHPVLIHCKSGKHRTGCLVGCVRKIQRWCLSSIFDEYQRFAAAKARISDQRFMELFDISNLKHTPLSFSCSKRYTNTIDY.

A disordered region spans residues 1–23 (MTLESYAGDVHTVPQSENSMEER). Positions 34 to 188 (NFAMVDNGIF…LKHTPLSFSC (155 aa)) constitute a Tyrosine-protein phosphatase domain. The WPD loop important for active site topology stretch occupies residues 90–102 (FGIERCKEPFVNI). N101 and I102 together coordinate 1D-myo-inositol hexakisphosphate. C126 (phosphocysteine intermediate) is an active-site residue.

This sequence belongs to the protein-tyrosine phosphatase family. Atypical dual-specificity phosphatase Siw14-like subfamily. In terms of tissue distribution, highly expressed in flowers and at lower levels in roots, leaves, stems and siliques.

It catalyses the reaction 5-diphospho-1D-myo-inositol 1,2,3,4,6-pentakisphosphate + H2O = 1D-myo-inositol hexakisphosphate + phosphate + H(+). The catalysed reaction is 1,5-bis(diphospho)-1D-myo-inositol 2,3,4,6-tetrakisphosphate + H2O = 1-diphospho-1D-myo-inositol 2,3,4,5,6-pentakisphosphate + phosphate + 2 H(+). It carries out the reaction 3,5-bis(diphospho)-1D-myo-inositol 1,2,4,6-tetrakisphosphate + H2O = 3-diphospho-1D-myo-inositol 1,2,4,5,6-pentakisphosphate + phosphate + 2 H(+). The enzyme catalyses 6-diphospho-1D-myo-inositol pentakisphosphate + H2O = 1D-myo-inositol hexakisphosphate + phosphate + H(+). Functionally, cleaves the beta-phosphate at the 5-position of soluble inositol pyrophosphates. Has highest activity on 5-diphosphoinositol 1,2,3,4,6-pentakisphosphate (5-InsP(7)), 1,5-bis-diphosphoinositol 2,3,4,6-tetrakisphosphate (1,5-InsP(8)) and 3,5-InsP(8). Acts as a negative regulator of defense responses against the bacterial pathogen Pseudomonas syringae pv tomato strain DC3000. This is Inositol diphosphatase DSP4 from Arabidopsis thaliana (Mouse-ear cress).